The following is a 55-amino-acid chain: uncharacterized protein (55 aa).

This is an uncharacterized protein from Acidithiobacillus ferrooxidans (Thiobacillus ferrooxidans).